A 78-amino-acid polypeptide reads, in one-letter code: uncharacterized protein (78 aa).

The helical transmembrane segment at 44 to 66 threads the bilayer; sequence ALYSLGFFLCTTIVIFSNIKFVV.

The protein belongs to the TatC family.

The protein localises to the plastid. Its subcellular location is the chloroplast membrane. This is an uncharacterized protein from Dictyota dichotoma.